Here is a 171-residue protein sequence, read N- to C-terminus: Inosine/xanthosine triphosphatase (171 aa).

8 to 13 (TTNPAK) provides a ligand contact to substrate. The Mg(2+) site is built by Asp-38 and Gln-68.

This sequence belongs to the YjjX NTPase family. Homodimer. Requires Mg(2+) as cofactor. It depends on Mn(2+) as a cofactor.

It catalyses the reaction XTP + H2O = XDP + phosphate + H(+). It carries out the reaction ITP + H2O = IDP + phosphate + H(+). Its function is as follows. Phosphatase that hydrolyzes non-canonical purine nucleotides such as XTP and ITP to their respective diphosphate derivatives. Probably excludes non-canonical purines from DNA/RNA precursor pool, thus preventing their incorporation into DNA/RNA and avoiding chromosomal lesions. The sequence is that of Inosine/xanthosine triphosphatase from Cronobacter sakazakii (strain ATCC BAA-894) (Enterobacter sakazakii).